Consider the following 65-residue polypeptide: Hirudin-2 (65 aa).

The tract at residues 1–3 (ITY) is interaction with thrombin active site. Intrachain disulfides connect Cys6-Cys14, Cys16-Cys28, and Cys22-Cys39. Residues 39-65 (CVTGEGTPKPQSHNDGDFEEIPEEYLQ) form a disordered region. Thr45 carries O-linked (GalNAc...) threonine glycosylation. Residues 55–65 (DFEEIPEEYLQ) are interaction with fibrinogen-binding exosite of thrombin. The span at 55 to 65 (DFEEIPEEYLQ) shows a compositional bias: acidic residues. Tyr63 carries the sulfotyrosine modification.

The protein belongs to the protease inhibitor I14 (hirudin) family.

Its subcellular location is the secreted. Functionally, hirudin is a potent thrombin-specific protease inhibitor. It forms a stable non-covalent complex with alpha-thrombin, thereby abolishing its ability to cleave fibrinogen. The chain is Hirudin-2 from Hirudo medicinalis (Medicinal leech).